A 1334-amino-acid chain; its full sequence is MNRTSPDSERPPASEPVWERPWSVEEIRRSSQNWSLAADAGLLQFLQEFSQQTISRTHEIKKQVDGLIQETKATHCRLHNVFNDFLMLSNTQFIENRVYDEEVEEQVLKAEAEKAEQEKTREQKEIDLIPKVQEAVNYGLQVLDSAFEQLDIKAGNSDSEEDDANERVDLILEPKDLYIDRPLPYLIGSKLFMEQEDVGLGELSSEEGSVGSDRGSIVDSEDEKEEEESDEDFASHSDNDQNQHTTQISDEEEDDDGDLFADSEKEGDDIEDIEESAKSKRPTSFADELAARIKGDISNQRKEGQTDGKPQKTVKEKKERRTPADDEEDILFPPPTLTDEDFSPFGSRGGLFSNGQGLFDDEDESDLFKEAPRARPAQAPVSEELPPSPKPGKKIPAGAVSVLLGHPDVSGSTSAPSLKELQKHGQPTPGKSSHLPTPAGLFDDDDNDNDEDDNNFFMPSSSKPSKTDKVKSTAIIFDDDEGDLFKEKAEALPAASVSQTHESKTRADKTIALPSSKNLKLVSETKTQKGLFSDEEDSEDLFSSQSSSKPKSASLPSSQPPTSVSLFGDEDEEDSLFGSAAAKKQTSSLQPQSQEKAKPSEQPSKKTSALLFSSDEEDQWNIADSHTKLASDNKSKGELWDSGATQGQEAKAVKKTNLFEDDDDDEVDLFAIAKDSQKKTQRTSLLFEDDAESGSSLFGLPPTSVPSATTKKESVPKVPLLFSDEEDSEVPSGVKPEDLKVDNARVSPEVGSADVASIAQKEGLLPASDQEAGGPSDIFSSSSPLDKGAKGRTRTVLSLFDEDEDKVEDESSTCAPQDGREKGLKTDSRPKSTGVFQDEELLFSHKLQKDNDPDVDLFAGTKKIRSSVPSGGSLFGDDEDDDLFSSAKTQPVVPEKKGTLKKDHPVSLKNQDPLDSTQGSKEKSTWKTEPAQDSSGLTPFKSREPSSRIGKIQANLAINPAALLPTVALQIPGTKPVSSELAFPSSEPGRSHILESVPTLPGSVEAGVSFDLPAQADTLHSANKSRVKVRGKRRPQTRAARRLAAQESSEAEDVTVDRGPVAQLSSSPVLPNGHQPLLQPRMASGQTSSETATAPPWEGGPVLSAADRSFFVKSRPQTGNEADLFDSGDIFPKSRGSQSVEGAGVMAGEPPSHSSGGRKEKSLAFPDLSEGSSTEDLFQSVKPRAAKNRNPFPLLEDEEDLFADPRGKKNERKPDSHQDSVSKTHDIFEDDIFATEAIKPFPKKREKGRTLEPNLFDDNIDIFADLTVKPKEKSKKKVAAKSMFDDDTDDIFSSGLQAKASKPKSQSAEAASEQRSEHKVASIFDDPLNAFGSQ.

The sufficient for interaction with WASHC3, WASHC4 and WASHC5; required for interaction with WASHC1 stretch occupies residues 1–219; it reads MNRTSPDSER…VGSDRGSIVD (219 aa). Phosphoserine is present on residues S157, S159, S204, S205, and S209. Low complexity predominate over residues 201–213; it reads GELSSEEGSVGSD. The tract at residues 201-471 is disordered; sequence GELSSEEGSV…SKPSKTDKVK (271 aa). 2 stretches are compositionally biased toward acidic residues: residues 219–232 and 249–274; these read DSED…SDED and SDEE…EDIE. S284 bears the Phosphoserine mark. Residues 289–324 show a composition bias toward basic and acidic residues; the sequence is LAARIKGDISNQRKEGQTDGKPQKTVKEKKERRTPA. Phosphothreonine is present on T322. The interval 347–594 is sufficient for interaction with CCDC93; it reads SRGGLFSNGQ…QTSSLQPQSQ (248 aa). The segment at 348–1334 is interaction with VPS35; sequence RGGLFSNGQG…DDPLNAFGSQ (987 aa). Residues 358 to 368 carry the LFa 1 motif; that stretch reads LFDDEDESDLF. S388 is subject to Phosphoserine. 2 short sequence motifs (LFa) span residues 441–457 and 476–485; these read LFDD…NNFF and IFDDDEGDLF. Over residues 442 to 454 the composition is skewed to acidic residues; it reads FDDDDNDNDEDDN. The segment at 492 to 650 is disordered; it reads LPAASVSQTH…DSGATQGQEA (159 aa). Residues 513–530 show a composition bias toward polar residues; that stretch reads LPSSKNLKLVSETKTQKG. Short sequence motifs (LFa) lie at residues 531–542 and 566–577; these read LFSDEEDSEDLF and LFGDEDEEDSLF. A phosphoserine mark is found at S533 and S538. Residues 541-561 are compositionally biased toward low complexity; the sequence is LFSSQSSSKPKSASLPSSQPP. Polar residues-rich tracts occupy residues 584–594 and 601–611; these read KQTSSLQPQSQ and EQPSKKTSALL. 2 positions are modified to phosphoserine: S613 and S614. Positions 625-639 are enriched in basic and acidic residues; the sequence is SHTKLASDNKSKGEL. 2 consecutive short sequence motifs (LFa) follow at residues 658–670 and 686–698; these read LFED…VDLF and LFED…SSLF. A disordered region spans residues 691-837; the sequence is AESGSSLFGL…SRPKSTGVFQ (147 aa). 5 positions are modified to phosphoserine: S723, S747, S752, S783, and S798. Positions 800 to 811 are enriched in acidic residues; it reads FDEDEDKVEDES. Basic and acidic residues predominate over residues 818–830; it reads DGREKGLKTDSRP. 2 consecutive short sequence motifs (LFa) follow at residues 835-843 and 852-858; these read VFQDEELLF and DPDVDLF. 2 disordered regions span residues 862–948 and 1014–1225; these read KKIR…PSSR and AQAD…SKTH. Phosphoserine is present on residues S870 and S873. An LFa 10 motif is present at residues 874–884; it reads LFGDDEDDDLF. Over residues 894–906 the composition is skewed to basic and acidic residues; sequence PEKKGTLKKDHPV. A compositionally biased stretch (polar residues) spans 908-919; sequence LKNQDPLDSTQG. Residues 932–1334 form an interaction with phospholipids region; that stretch reads QDSSGLTPFK…DDPLNAFGSQ (403 aa). The segment covering 1023 to 1041 has biased composition (basic residues); it reads NKSRVKVRGKRRPQTRAAR. Residues 1024-1042 are required for interaction with F-actin-capping protein subunit alpha (CAPZA1 or CAPZA2 or CAPZA3); that stretch reads KSRVKVRGKRRPQTRAARR. A phosphoserine mark is found at S1049, S1067, S1084, and S1109. 3 short sequence motifs (LFa) span residues 1124–1131, 1164–1178, and 1194–1202; these read LFDSGDIF, AFPD…EDLF, and LLEDEEDLF. 3 positions are modified to phosphoserine: S1169, S1172, and S1173. The span at 1203–1225 shows a compositional bias: basic and acidic residues; sequence ADPRGKKNERKPDSHQDSVSKTH. Short sequence motifs (LFa) lie at residues 1227–1233, 1255–1263, and 1283–1292; these read IFEDDIF, LFDDNIDIF, and MFDDDTDDIF. A disordered region spans residues 1294–1334; that stretch reads SGLQAKASKPKSQSAEAASEQRSEHKVASIFDDPLNAFGSQ. Over residues 1297-1311 the composition is skewed to low complexity; the sequence is QAKASKPKSQSAEAA. The LFa 17 signature appears at 1323-1331; sequence IFDDPLNAF. S1333 bears the Phosphoserine mark.

Belongs to the FAM21 family. As to quaternary structure, component of the WASH core complex also described as WASH regulatory complex (SHRC) composed of WASHC1, WASHC2, WASHC3, WASHC4 and WASHC5; in the complex interacts (via N-terminus) directly with WASHC1. The WASH core complex associates with the F-actin-capping protein dimer (formed by CAPZA1, CAPZA2 or CAPZA3 and CAPZB) in a transient or substoichiometric manner which was initially described as WASH complex. Interacts with VPS35; mediates the association with the retromer CSC complex. Interacts with FKBP15. Interacts with CCDC93, CCDC22, VPS35L; indicative for an association of the WASH core complex with the CCC and retriever complexes. Directly interacts with TBC1D23.

It localises to the early endosome membrane. Its subcellular location is the cell membrane. Acts as a component of the WASH core complex that functions as a nucleation-promoting factor (NPF) at the surface of endosomes, where it recruits and activates the Arp2/3 complex to induce actin polymerization, playing a key role in the fission of tubules that serve as transport intermediates during endosome sorting. Mediates the recruitment of the WASH core complex to endosome membranes via binding to phospholipids and VPS35 of the retromer CSC. Mediates the recruitment of the F-actin-capping protein dimer to the WASH core complex probably promoting localized F-actin polymerization needed for vesicle scission. Via its C-terminus binds various phospholipids, most strongly phosphatidylinositol 4-phosphate (PtdIns-(4)P), phosphatidylinositol 5-phosphate (PtdIns-(5)P) and phosphatidylinositol 3,5-bisphosphate (PtdIns-(3,5)P2). Involved in the endosome-to-plasma membrane trafficking and recycling of SNX27-retromer-dependent cargo proteins, such as GLUT1. Required for the association of DNAJC13, ENTR1, ANKRD50 with retromer CSC subunit VPS35. Required for the endosomal recruitment of CCC and retriever complexes subunits COMMD1 and CCDC93 as well as the retrievere complex subunit VPS35L. The polypeptide is WASH complex subunit 2 (Mus musculus (Mouse)).